The chain runs to 332 residues: Spherulin-4 (332 aa).

An N-terminal signal peptide occupies residues 1–22 (MNIKIVVLVIFAILLGSALAWH). The segment at 26 to 60 (HHNPTKAPTEAPHRGGGGGGGHNTPAPTQPPRQNT) is disordered.

The sequence is that of Spherulin-4 from Physarum polycephalum (Slime mold).